Consider the following 309-residue polypeptide: Methionyl-tRNA formyltransferase (309 aa).

107–110 (SLLP) lines the (6S)-5,6,7,8-tetrahydrofolate pocket.

This sequence belongs to the Fmt family.

It catalyses the reaction L-methionyl-tRNA(fMet) + (6R)-10-formyltetrahydrofolate = N-formyl-L-methionyl-tRNA(fMet) + (6S)-5,6,7,8-tetrahydrofolate + H(+). In terms of biological role, attaches a formyl group to the free amino group of methionyl-tRNA(fMet). The formyl group appears to play a dual role in the initiator identity of N-formylmethionyl-tRNA by promoting its recognition by IF2 and preventing the misappropriation of this tRNA by the elongation apparatus. The protein is Methionyl-tRNA formyltransferase of Borrelia hermsii (strain HS1 / DAH).